The following is a 571-amino-acid chain: uncharacterized protein (571 aa).

The disordered stretch occupies residues 1–25; sequence MAPSVATSLKAEILPSPRTSSPSSN. Residues 135-389 enclose the FAD-binding FR-type domain; sequence FSVFPAPILD…RGLHKNAFAT (255 aa). The tract at residues 447–479 is disordered; that stretch reads NPLQKSSDDDASSTVSQQTETEMDSFEVKKDGT.

It belongs to the flavoprotein pyridine nucleotide cytochrome reductase family. Requires FAD as cofactor.

This is an uncharacterized protein from Schizosaccharomyces pombe (strain 972 / ATCC 24843) (Fission yeast).